The sequence spans 896 residues: Translation initiation factor IF-2 (896 aa).

The segment covering 117–174 has biased composition (basic and acidic residues); the sequence is AEAEAKAKAEAEAKAKVDAEAKVKAKAEAEAKAKAKVQTEKPAAETAEDKAAKAEEAK. Residues 117 to 303 are disordered; sequence AEAEAKAKAE…TRSVAPESMD (187 aa). A compositionally biased stretch (low complexity) spans 175-195; the sequence is LLAAQDAVAKAKANEEASAAA. A compositionally biased stretch (basic and acidic residues) spans 196 to 227; that stretch reads DEARRLAEENEKRWAEEEKARKEAEKSVDHHV. Positions 254-268 are enriched in low complexity; the sequence is PSANAGNNANANAGA. Residues 396-563 form the tr-type G domain; that stretch reads PRAPVVTIMG…GILLEAEVLE (168 aa). Positions 405–412 are G1; that stretch reads GHVDHGKT. Residue 405–412 participates in GTP binding; the sequence is GHVDHGKT. Residues 430 to 434 are G2; sequence GITQH. Residues 451–454 are G3; it reads DTPG. GTP-binding positions include 451 to 455 and 505 to 508; these read DTPGH and NKID. A G4 region spans residues 505–508; the sequence is NKID. Positions 541-543 are G5; that stretch reads SAK.

It belongs to the TRAFAC class translation factor GTPase superfamily. Classic translation factor GTPase family. IF-2 subfamily.

It localises to the cytoplasm. One of the essential components for the initiation of protein synthesis. Protects formylmethionyl-tRNA from spontaneous hydrolysis and promotes its binding to the 30S ribosomal subunits. Also involved in the hydrolysis of GTP during the formation of the 70S ribosomal complex. The chain is Translation initiation factor IF-2 from Shewanella pealeana (strain ATCC 700345 / ANG-SQ1).